The following is a 777-amino-acid chain: Transcriptional regulator QRICH1 (777 aa).

N-acetylmethionine is present on M1. In terms of domain architecture, CARD spans 6–48 (ENTISFEEYIRVKARSVPQHRMKEFLDSLASKGPEALQEFQQT). Disordered stretches follow at residues 140–164 (IQGQ…SPSQ) and 219–240 (ALSP…VGTA). Position 346 is a phosphoserine (S346). Glycyl lysine isopeptide (Lys-Gly) (interchain with G-Cter in SUMO2) cross-links involve residues K354 and K359. A disordered region spans residues 420–440 (QQQPQQQTAQEQTPPPQQQQQ). S465 is modified (phosphoserine).

Expressed highly in prefrontal cortex, craniofacial area and near the limbs of mouse embryos. Expressed in heart, skeletal muscle, liver, kidney, lung, brain, spleen, intestine and growth plate in mice.

Its subcellular location is the nucleus. It localises to the cytoplasm. It is found in the cell membrane. Its function is as follows. Transcriptional regulator that acts as a mediator of the integrated stress response (ISR) through transcriptional control of protein homeostasis under conditions of ER stress. Controls the outcome of the unfolded protein response (UPR), an ER-stress response pathway that either promotes recovery of ER homeostasis and cell survival, or triggers the terminal UPR which elicits programmed cell death when ER stress is prolonged and unresolved. ER stress induces QRICH1 translation by a ribosome translation re-initiation mechanism in response to EIF2S1/eIF-2-alpha phosphorylation, and stress-induced QRICH1 regulates a transcriptional program associated with protein translation, protein secretion-mediated proteotoxicity and cell death during the terminal UPR. May cooperate with ATF4 transcription factor signaling to regulate ER homeostasis which is critical for cell viability. Up-regulates CASP3/caspase-3 activity in epithelial cells under ER stress. Central regulator of proteotoxicity associated with ER stress-mediated inflammatory diseases in the intestines and liver. Involved in chondrocyte hypertrophy, a process required for normal longitudinal bone growth. The sequence is that of Transcriptional regulator QRICH1 from Mus musculus (Mouse).